The primary structure comprises 238 residues: Transmembrane protein 127 (238 aa).

Residue Met1 is modified to N-acetylmethionine. Gly residues predominate over residues 1–11 (MYAPGGAGLPG). The disordered stretch occupies residues 1 to 27 (MYAPGGAGLPGGRRRRSPGGSALPKQP). The residue at position 17 (Ser17) is a Phosphoserine. 3 consecutive transmembrane segments (helical) span residues 96–116 (IAAFCFLGILCSLSAFLLDVF), 130–150 (AFAHILTVLQCATVIGFSYWA), and 169–189 (VYVTFAVSFYLVAGAGGASIL).

Belongs to the TMEM127 family. In terms of tissue distribution, widely expressed.

The protein resides in the cell membrane. Its subcellular location is the cytoplasm. Its function is as follows. Controls cell proliferation acting as a negative regulator of TOR signaling pathway mediated by mTORC1. May act as a tumor suppressor. The chain is Transmembrane protein 127 (TMEM127) from Homo sapiens (Human).